Here is a 244-residue protein sequence, read N- to C-terminus: 7-cyano-7-deazaguanine synthase (244 aa).

Position 14–24 (14–24 (FSGGQDSATCV)) interacts with ATP. Residues C202, C217, C220, and C223 each coordinate Zn(2+).

The protein belongs to the QueC family. Requires Zn(2+) as cofactor.

The enzyme catalyses 7-carboxy-7-deazaguanine + NH4(+) + ATP = 7-cyano-7-deazaguanine + ADP + phosphate + H2O + H(+). It participates in purine metabolism; 7-cyano-7-deazaguanine biosynthesis. In terms of biological role, catalyzes the ATP-dependent conversion of 7-carboxy-7-deazaguanine (CDG) to 7-cyano-7-deazaguanine (preQ(0)). The protein is 7-cyano-7-deazaguanine synthase of Burkholderia vietnamiensis (strain G4 / LMG 22486) (Burkholderia cepacia (strain R1808)).